We begin with the raw amino-acid sequence, 138 residues long: ATP synthase epsilon chain (138 aa).

The protein belongs to the ATPase epsilon chain family. In terms of assembly, F-type ATPases have 2 components, CF(1) - the catalytic core - and CF(0) - the membrane proton channel. CF(1) has five subunits: alpha(3), beta(3), gamma(1), delta(1), epsilon(1). CF(0) has three main subunits: a, b and c.

The protein resides in the cell inner membrane. Functionally, produces ATP from ADP in the presence of a proton gradient across the membrane. This chain is ATP synthase epsilon chain, found in Wigglesworthia glossinidia brevipalpis.